Reading from the N-terminus, the 309-residue chain is tRNA dimethylallyltransferase (309 aa).

8-15 (GPTATGKS) serves as a coordination point for ATP. 10–15 (TATGKS) contributes to the substrate binding site. Residues 33–36 (DSRQ) form an interaction with substrate tRNA region.

Belongs to the IPP transferase family. As to quaternary structure, monomer. Mg(2+) is required as a cofactor.

It catalyses the reaction adenosine(37) in tRNA + dimethylallyl diphosphate = N(6)-dimethylallyladenosine(37) in tRNA + diphosphate. Functionally, catalyzes the transfer of a dimethylallyl group onto the adenine at position 37 in tRNAs that read codons beginning with uridine, leading to the formation of N6-(dimethylallyl)adenosine (i(6)A). The protein is tRNA dimethylallyltransferase of Trichodesmium erythraeum (strain IMS101).